A 137-amino-acid chain; its full sequence is Small ribosomal subunit protein bS6 (137 aa).

Residues Ile96–Glu137 are disordered. The segment covering Lys104–Glu137 has biased composition (basic and acidic residues).

It belongs to the bacterial ribosomal protein bS6 family.

Functionally, binds together with bS18 to 16S ribosomal RNA. The sequence is that of Small ribosomal subunit protein bS6 from Shewanella piezotolerans (strain WP3 / JCM 13877).